A 335-amino-acid polypeptide reads, in one-letter code: Ethanol acetyltransferase 1 (335 aa).

An AB hydrolase-1 domain is found at Pro-48–Arg-300. Catalysis depends on charge relay system residues Ser-121, Asp-145, and His-294.

This sequence belongs to the AB hydrolase superfamily.

The protein localises to the mitochondrion. The catalysed reaction is ethanol + acetyl-CoA = ethyl acetate + CoA. The enzyme catalyses acetyl-CoA + H2O = acetate + CoA + H(+). It catalyses the reaction ethyl acetate + H2O = ethanol + acetate + H(+). Functionally, alcohol acetyltransferase that catalyzes the synthesis of ethyl acetate from ethanol and acetyl-CoA. Can also function as a thioesterase by hydrolyzing acetyl-CoA in the absence of ethanol, as well as esterase hydrolyzing ethyl acetate. The chain is Ethanol acetyltransferase 1 (EAT1) from Cyberlindnera fabianii (Yeast).